A 417-amino-acid polypeptide reads, in one-letter code: MFSRDVRLETYDPELAKAIAAEAGRQEDHVELIASENYCSPLVMEAQGSQLTNKYAEGYPGKRYYGGCEFVDIAEQLAIERIKQVFGADYANVQPHSGSQANQAVYLALLQPGDTILGMSLAHGGHLTHGAKVNVSGKLFNAVQYGVNEQGLIDYDEVQRLATEHKPKMVVAGFSAYSQKIDWARFRAIADSVGAYLFVDMAHIAGLVAAGVYPSPMEHAHVVTSTTHKTLRGPRGGIIVAKGASEELQKKLQSIVFPGIQGGPLMHVIAAKAVAFKEALEPAFKTYQQQVVKNAQAMANTLIARGYKIVSGGTENHLMLVDMIGRDVSGKDAEAALGKAHITVNKNSVPNDPRSPFVTSGLRLGTPAITTRGYQEQDSIDLANWIADVLDAPTDEAVLAKVRDAVTAQCKRYPVYG.

Residues L121 and 125–127 (GHL) each bind (6S)-5,6,7,8-tetrahydrofolate. K229 bears the N6-(pyridoxal phosphate)lysine mark. 355–357 (SPF) contributes to the (6S)-5,6,7,8-tetrahydrofolate binding site.

This sequence belongs to the SHMT family. Homodimer. The cofactor is pyridoxal 5'-phosphate.

It localises to the cytoplasm. It catalyses the reaction (6R)-5,10-methylene-5,6,7,8-tetrahydrofolate + glycine + H2O = (6S)-5,6,7,8-tetrahydrofolate + L-serine. The protein operates within one-carbon metabolism; tetrahydrofolate interconversion. It participates in amino-acid biosynthesis; glycine biosynthesis; glycine from L-serine: step 1/1. Its function is as follows. Catalyzes the reversible interconversion of serine and glycine with tetrahydrofolate (THF) serving as the one-carbon carrier. This reaction serves as the major source of one-carbon groups required for the biosynthesis of purines, thymidylate, methionine, and other important biomolecules. Also exhibits THF-independent aldolase activity toward beta-hydroxyamino acids, producing glycine and aldehydes, via a retro-aldol mechanism. The polypeptide is Serine hydroxymethyltransferase (Xanthomonas axonopodis pv. citri (strain 306)).